The chain runs to 417 residues: UDP-N-acetylglucosamine 1-carboxyvinyltransferase (417 aa).

Phosphoenolpyruvate is bound at residue 22–23; it reads KN. Arg93 is a UDP-N-acetyl-alpha-D-glucosamine binding site. Residue Cys117 is the Proton donor of the active site. Position 117 is a 2-(S-cysteinyl)pyruvic acid O-phosphothioketal (Cys117). Residues 122–126, Asp305, and Ile327 contribute to the UDP-N-acetyl-alpha-D-glucosamine site; that span reads RPVDQ.

The protein belongs to the EPSP synthase family. MurA subfamily.

The protein resides in the cytoplasm. The enzyme catalyses phosphoenolpyruvate + UDP-N-acetyl-alpha-D-glucosamine = UDP-N-acetyl-3-O-(1-carboxyvinyl)-alpha-D-glucosamine + phosphate. It participates in cell wall biogenesis; peptidoglycan biosynthesis. In terms of biological role, cell wall formation. Adds enolpyruvyl to UDP-N-acetylglucosamine. This chain is UDP-N-acetylglucosamine 1-carboxyvinyltransferase, found in Chromobacterium violaceum (strain ATCC 12472 / DSM 30191 / JCM 1249 / CCUG 213 / NBRC 12614 / NCIMB 9131 / NCTC 9757 / MK).